A 256-amino-acid chain; its full sequence is Cell division protein DivIB (256 aa).

At 1 to 30 the chain is on the cytoplasmic side; it reads MNNSKVIKLQDRVPKLKNQKKKNKKNVNHR. Residues 31–51 form a helical membrane-spanning segment; that stretch reads LILYISILFLLVLFLIYFRSP. The Extracellular segment spans residues 52–256; sequence LSNIKKISVF…KELGAEEKKE (205 aa). A POTRA domain is found at 53–121; sequence SNIKKISVFG…NNIDIHIEEY (69 aa).

Belongs to the FtsQ/DivIB family. DivIB subfamily.

Its subcellular location is the cell membrane. Cell division protein that may be involved in stabilizing or promoting the assembly of the division complex. This Bacillus cereus (strain ATCC 14579 / DSM 31 / CCUG 7414 / JCM 2152 / NBRC 15305 / NCIMB 9373 / NCTC 2599 / NRRL B-3711) protein is Cell division protein DivIB.